Reading from the N-terminus, the 210-residue chain is Na(+)-translocating NADH-quinone reductase subunit D (210 aa).

Helical transmembrane passes span 11-31 (ILAPVLDNNPIALQVLGVCSA), 42-62 (FVMTLAVMFVTAFSNLFVSLI), 70-90 (VRIIVQMAIIASLVIVVDQIL), 103-123 (VFVGLIITNCIVMGRAEAFAM), 131-151 (FIDGIGNGLGYGFVLITVGFF), and 178-198 (NGLMLLAPSAFFLIGFMIWAI).

Belongs to the NqrDE/RnfAE family. In terms of assembly, composed of six subunits; NqrA, NqrB, NqrC, NqrD, NqrE and NqrF.

It localises to the cell inner membrane. The enzyme catalyses a ubiquinone + n Na(+)(in) + NADH + H(+) = a ubiquinol + n Na(+)(out) + NAD(+). Functionally, NQR complex catalyzes the reduction of ubiquinone-1 to ubiquinol by two successive reactions, coupled with the transport of Na(+) ions from the cytoplasm to the periplasm. NqrA to NqrE are probably involved in the second step, the conversion of ubisemiquinone to ubiquinol. This chain is Na(+)-translocating NADH-quinone reductase subunit D, found in Vibrio anguillarum (Listonella anguillarum).